Consider the following 1680-residue polypeptide: RAF-like serine/threonine-protein kinase PRAF (1680 aa).

The disordered stretch occupies residues 86-163; the sequence is FSPSDPHNSV…TPSDDGKDFP (78 aa). Residues 166–267 form the PB1 domain; sequence RVKFMCSFGG…SRLRVFLFPA (102 aa). Disordered stretches follow at residues 363–388, 417–516, 556–580, 594–613, 641–672, 700–725, and 1186–1226; these read LTGN…PLLA, PQYT…DSQQ, PDML…QPQQ, GANH…SQQF, QSTS…PQLQ, RSFR…LHRQ, and LPNA…LGGQ. Residues 366–388 are compositionally biased toward low complexity; sequence NLSNRSNAPSAPSSAPSSPPLLA. Residues 446-482 are compositionally biased toward basic and acidic residues; the sequence is HEMHYRSTDSRRGPESPPKKFHDALHQDHPITVEQRR. 2 stretches are compositionally biased toward low complexity: residues 560 to 580 and 603 to 613; these read QSSG…QPQQ and QGDQQQQSQQF. The span at 641–651 shows a compositional bias: polar residues; that stretch reads QSTSYHGSAPS. Residues 1204–1217 are compositionally biased toward low complexity; sequence SRSSSSSLSELSKS. Position 1248 is a phosphoserine (Ser-1248). Basic and acidic residues predominate over residues 1339–1354; that stretch reads ASTVDKENQEEVRTGL. Residues 1339–1372 are disordered; it reads ASTVDKENQEEVRTGLDEPADEDKANSTGLGSDP. Ser-1365 is modified (phosphoserine). The region spanning 1389-1655 is the Protein kinase domain; that stretch reads LEELRELGSG…SDIAKELRTM (267 aa). ATP-binding positions include 1395–1403 and Lys-1416; that span reads LGSGTFGTV. Residue Asp-1518 is the Proton acceptor of the active site. The tract at residues 1661 to 1680 is disordered; the sequence is PKTQAQTQGQSHPHPQMQIV.

This sequence belongs to the protein kinase superfamily. Ser/Thr protein kinase family. Hyperphosphorylated in response to auxin. Its phosphorylation state is also rapidly stimulated by photosynthetic activity (e.g. in response to blue light and red light irradiation); dephosphorylated in the darkness.

It is found in the cytoplasm. The catalysed reaction is L-seryl-[protein] + ATP = O-phospho-L-seryl-[protein] + ADP + H(+). The enzyme catalyses L-threonyl-[protein] + ATP = O-phospho-L-threonyl-[protein] + ADP + H(+). Its activity is regulated as follows. Activated by auxin via rapid phosphorylation. Regulated by photosynthesis-activity-dependent changes in its phosphorylation status. RAF-like protein kinase acting as a central mediator of a fast response pathway to auxin involving proteins phosphorylation, and leading to rapid cellular responses including membrane depolarization and cytoplasmic streaming. Required for general growth and developmental process. Photosynthesis signaling kinase involved in the regulation of the sucrose metabolism involving PGM1. Necessary for optimal chloroplast electron transport rate (ETR). This is RAF-like serine/threonine-protein kinase PRAF from Marchantia polymorpha (Common liverwort).